We begin with the raw amino-acid sequence, 741 residues long: Aspartyl/asparaginyl beta-hydroxylase (741 aa).

Residues 1–54 form a disordered region; the sequence is MAPRKNAKGGGGNSSSSGSGSGSGSGSPSTGSSGSSSSPGARREAKHGGHKNGR. Residues 1-62 are Cytoplasmic-facing; sequence MAPRKNAKGG…GRRGGISGGS (62 aa). Positions 8–25 are enriched in gly residues; it reads KGGGGNSSSSGSGSGSGS. Ser-15 carries the phosphoserine modification. The segment covering 26–40 has biased composition (low complexity); sequence GSPSTGSSGSSSSPG. The chain crosses the membrane as a helical; Signal-anchor for type II membrane protein span at residues 63 to 83; it reads FFTWFMVIALLGVWTSVAVVW. At 84 to 741 the chain is on the lumenal side; sequence FDLVDYEEVL…PQQRRSLPAI (658 aa). Positions 100, 102, 104, 106, and 111 each coordinate Ca(2+). Disordered stretches follow at residues 120 to 141 and 222 to 244; these read ERSP…AELE and TASQ…SDPS. A compositionally biased stretch (acidic residues) spans 231–242; the sequence is MEEMTNEQENSD. 5 TPR repeats span residues 324–357, 365–398, 437–470, 472–504, and 508–540; these read IKAE…YPQS, AQCE…PDAP, TTLK…TPND, FAKV…GDPG, and GRFY…GHFA. N-linked (GlcNAc...) asparagine glycosylation occurs at Asn-453. 2-oxoglutarate is bound at residue Trp-608. Cysteines 624 and 631 form a disulfide. Residue Ser-651 participates in 2-oxoglutarate binding. His-662 contributes to the Fe cation binding site. Position 671-673 (671-673) interacts with 2-oxoglutarate; sequence RMH. A glycan (N-linked (GlcNAc...) asparagine) is linked at Asn-689. A Fe cation-binding site is contributed by His-708. Arg-718 contributes to the 2-oxoglutarate binding site.

The protein belongs to the aspartyl/asparaginyl beta-hydroxylase family. Monomer. Isoform 2 interacts with CASQ2. The cofactor is Fe cation. Isoform 1 is detected in heart, liver and ovary (at protein level). Detected in heart ventricle. Isoform 1 is widely expressed. Isoform 2 is detected in heart and skeletal muscle.

It is found in the endoplasmic reticulum membrane. The protein resides in the sarcoplasmic reticulum membrane. It catalyses the reaction L-aspartyl-[protein] + 2-oxoglutarate + O2 = 3-hydroxy-L-aspartyl-[protein] + succinate + CO2. Specifically hydroxylates an Asp or Asn residue in certain epidermal growth factor-like (EGF) domains of a number of proteins. The sequence is that of Aspartyl/asparaginyl beta-hydroxylase (Asph) from Mus musculus (Mouse).